Consider the following 392-residue polypeptide: Putative nickel insertion protein (392 aa).

Belongs to the LarC family.

The sequence is that of Putative nickel insertion protein from Methanothrix thermoacetophila (strain DSM 6194 / JCM 14653 / NBRC 101360 / PT) (Methanosaeta thermophila).